The primary structure comprises 228 residues: tRNA (guanine-N(1)-)-methyltransferase (228 aa).

Residues Gly108 and 127 to 132 (VGDFIL) contribute to the S-adenosyl-L-methionine site.

The protein belongs to the RNA methyltransferase TrmD family. As to quaternary structure, homodimer.

Its subcellular location is the cytoplasm. It carries out the reaction guanosine(37) in tRNA + S-adenosyl-L-methionine = N(1)-methylguanosine(37) in tRNA + S-adenosyl-L-homocysteine + H(+). Its function is as follows. Specifically methylates guanosine-37 in various tRNAs. The sequence is that of tRNA (guanine-N(1)-)-methyltransferase from Metamycoplasma arthritidis (strain 158L3-1) (Mycoplasma arthritidis).